The chain runs to 475 residues: MEIOTIC F-BOX protein MOF (475 aa).

The disordered stretch occupies residues 1 to 58; sequence MRRERDATQIPENPMEGIPQTAAAAAAAAAAEASEPPRKRARVDGGGGGAGEEEEDRL. A compositionally biased stretch (low complexity) spans 22–33; that stretch reads AAAAAAAAAAEA. The region spanning 55-91 is the F-box domain; it reads EDRLSDLPDCLLEDILAHLGSRQAVQTSVLSRRWRNL.

The protein belongs to the F-box protein family. FBX subfamily. As to quaternary structure, part of a SCF (SKP1-CUL1-F-box protein) E3 ubiquitin-protein ligase complex. Interacts (via F-box domain) directly with SKP1. As to expression, highly expressed in the stem, leaf and in the anther during meiosis. Weakly expressed in roots and lemma/palea.

It localises to the nucleus. It is found in the chromosome. Its pathway is protein modification; protein ubiquitination. Functionally, probable component of a SCF (SKP1-CULLIN-F-box protein) E3 ubiquitin-protein ligase complex and may function through the ubiquitin-mediated protein degradation or signaling pathway. Required for male meiotic prophase I progression. Required for telomere bouquet formation, homologous chromosome pairing and for the formation of the synaptonemal complex (SC), which stabilizes initial chromosomal axial associations and promotes crossover formation. Involved in meiotic DNA double-strand break (DSB) end-processing and repair, and is important in the recruitment of DSB repair proteins to the DSB sites. The sequence is that of MEIOTIC F-BOX protein MOF from Oryza sativa subsp. japonica (Rice).